The sequence spans 153 residues: Arginine repressor (153 aa).

This sequence belongs to the ArgR family.

It is found in the cytoplasm. Its pathway is amino-acid biosynthesis; L-arginine biosynthesis [regulation]. In terms of biological role, regulates arginine biosynthesis genes. The chain is Arginine repressor from Haemophilus ducreyi (strain 35000HP / ATCC 700724).